A 185-amino-acid polypeptide reads, in one-letter code: Elongation factor P (185 aa).

It belongs to the elongation factor P family.

The protein localises to the cytoplasm. It participates in protein biosynthesis; polypeptide chain elongation. Functionally, involved in peptide bond synthesis. Stimulates efficient translation and peptide-bond synthesis on native or reconstituted 70S ribosomes in vitro. Probably functions indirectly by altering the affinity of the ribosome for aminoacyl-tRNA, thus increasing their reactivity as acceptors for peptidyl transferase. This chain is Elongation factor P, found in Alkaliphilus metalliredigens (strain QYMF).